We begin with the raw amino-acid sequence, 220 residues long: UPF0319 protein YccT (220 aa).

Positions 1 to 20 (MKTGALTTFLALCLPVTVFA) are cleaved as a signal peptide.

This sequence belongs to the UPF0319 family.

This is UPF0319 protein YccT from Salmonella schwarzengrund (strain CVM19633).